Consider the following 45-residue polypeptide: Photosystem II reaction center protein K (45 aa).

A propeptide spanning residues 1 to 8 (MEAALLLA) is cleaved from the precursor. A helical transmembrane segment spans residues 24-44 (LPIIPVFFLLLAFVWQAAVGF).

Belongs to the PsbK family. PSII is composed of 1 copy each of membrane proteins PsbA, PsbB, PsbC, PsbD, PsbE, PsbF, PsbH, PsbI, PsbJ, PsbK, PsbL, PsbM, PsbT, PsbX, PsbY, PsbZ, Psb30/Ycf12, peripheral proteins PsbO, CyanoQ (PsbQ), PsbU, PsbV and a large number of cofactors. It forms dimeric complexes.

It localises to the cellular thylakoid membrane. In terms of biological role, one of the components of the core complex of photosystem II (PSII). PSII is a light-driven water:plastoquinone oxidoreductase that uses light energy to abstract electrons from H(2)O, generating O(2) and a proton gradient subsequently used for ATP formation. It consists of a core antenna complex that captures photons, and an electron transfer chain that converts photonic excitation into a charge separation. The protein is Photosystem II reaction center protein K of Nostoc sp. (strain PCC 7120 / SAG 25.82 / UTEX 2576).